Reading from the N-terminus, the 76-residue chain is Putative cation transport regulator ChaB (76 aa).

The protein belongs to the ChaB family. As to quaternary structure, monomer.

Functionally, might be a regulator of the sodium-potassium/proton antiporter ChaA. The chain is Putative cation transport regulator ChaB from Escherichia coli O157:H7.